The sequence spans 114 residues: Thioredoxin H1 (114 aa).

At Ala2 the chain carries N-acetylalanine. A Thioredoxin domain is found at 2 to 114 (ASEEGQVIAC…LQSTIAKHLA (113 aa)). Active-site nucleophile residues include Cys40 and Cys43. An intrachain disulfide couples Cys40 to Cys43.

The protein belongs to the thioredoxin family. Plant H-type subfamily. Interacts with FBA6. Interacts with MDH1.

The protein localises to the cytoplasm. Thiol-disulfide oxidoreductase involved in the redox regulation of a number of cytosolic enzymes. Activates the cytosolic malate dehydrogenase (MDH) probably by reducing an interchain disulfide bond of the inactive MDH homodimer. Possesses insulin disulfide bonds reducing activity. This Arabidopsis thaliana (Mouse-ear cress) protein is Thioredoxin H1 (TRX1).